A 496-amino-acid chain; its full sequence is GTPase Der (496 aa).

EngA-type G domains are found at residues 3–166 and 208–381; these read PVVA…FDNL and IKLA…RSAT. GTP is bound by residues 9 to 16, 56 to 60, 118 to 121, 214 to 221, 261 to 265, and 326 to 329; these read GRPNVGKS, DTGGI, NKVD, DTAGV, and NKWD. Residues 382 to 466 form the KH-like domain; the sequence is TRVGTSVLTR…PIRIQFQNSD (85 aa).

This sequence belongs to the TRAFAC class TrmE-Era-EngA-EngB-Septin-like GTPase superfamily. EngA (Der) GTPase family. As to quaternary structure, associates with the 50S ribosomal subunit.

GTPase that plays an essential role in the late steps of ribosome biogenesis. The chain is GTPase Der from Vibrio vulnificus (strain CMCP6).